The chain runs to 224 residues: Phosphoribosylformylglycinamidine synthase subunit PurQ (224 aa).

Residues 3-224 (FGVVVFPGSN…GLLEKVVALA (222 aa)) form the Glutamine amidotransferase type-1 domain. Residue Cys86 is the Nucleophile of the active site. Active-site residues include His195 and Glu197.

As to quaternary structure, part of the FGAM synthase complex composed of 1 PurL, 1 PurQ and 2 PurS subunits.

The protein resides in the cytoplasm. The enzyme catalyses N(2)-formyl-N(1)-(5-phospho-beta-D-ribosyl)glycinamide + L-glutamine + ATP + H2O = 2-formamido-N(1)-(5-O-phospho-beta-D-ribosyl)acetamidine + L-glutamate + ADP + phosphate + H(+). The catalysed reaction is L-glutamine + H2O = L-glutamate + NH4(+). The protein operates within purine metabolism; IMP biosynthesis via de novo pathway; 5-amino-1-(5-phospho-D-ribosyl)imidazole from N(2)-formyl-N(1)-(5-phospho-D-ribosyl)glycinamide: step 1/2. Its function is as follows. Part of the phosphoribosylformylglycinamidine synthase complex involved in the purines biosynthetic pathway. Catalyzes the ATP-dependent conversion of formylglycinamide ribonucleotide (FGAR) and glutamine to yield formylglycinamidine ribonucleotide (FGAM) and glutamate. The FGAM synthase complex is composed of three subunits. PurQ produces an ammonia molecule by converting glutamine to glutamate. PurL transfers the ammonia molecule to FGAR to form FGAM in an ATP-dependent manner. PurS interacts with PurQ and PurL and is thought to assist in the transfer of the ammonia molecule from PurQ to PurL. The polypeptide is Phosphoribosylformylglycinamidine synthase subunit PurQ (Nostoc sp. (strain PCC 7120 / SAG 25.82 / UTEX 2576)).